A 227-amino-acid chain; its full sequence is Deoxyribose-phosphate aldolase (227 aa).

D96 (proton donor/acceptor) is an active-site residue. Catalysis depends on K158, which acts as the Schiff-base intermediate with acetaldehyde. K187 functions as the Proton donor/acceptor in the catalytic mechanism.

This sequence belongs to the DeoC/FbaB aldolase family. DeoC type 1 subfamily.

It is found in the cytoplasm. It catalyses the reaction 2-deoxy-D-ribose 5-phosphate = D-glyceraldehyde 3-phosphate + acetaldehyde. It functions in the pathway carbohydrate degradation; 2-deoxy-D-ribose 1-phosphate degradation; D-glyceraldehyde 3-phosphate and acetaldehyde from 2-deoxy-alpha-D-ribose 1-phosphate: step 2/2. Catalyzes a reversible aldol reaction between acetaldehyde and D-glyceraldehyde 3-phosphate to generate 2-deoxy-D-ribose 5-phosphate. This Desulfotalea psychrophila (strain LSv54 / DSM 12343) protein is Deoxyribose-phosphate aldolase.